The following is a 265-amino-acid chain: Cytoplasmic envelopment protein 1 (265 aa).

This sequence belongs to the herpesviridae cytoplasmic envelopment protein 1 family.

It is found in the virion. The protein localises to the virion tegument. It localises to the host cytoplasm. Its subcellular location is the host Golgi apparatus. In terms of biological role, plays a critical role in cytoplasmic virus egress. Participates in the final step of tegumentation and envelope acquisition within the host cytoplasm. The protein is Cytoplasmic envelopment protein 1 (42) of Saimiriine herpesvirus 2 (strain 11) (SaHV-2).